A 631-amino-acid polypeptide reads, in one-letter code: Probable basic-leucine zipper transcription factor F (631 aa).

Residues 35–62 are a coiled coil; the sequence is KKNANVFNNFQQQQQQIQQQNKQSNGLI. Disordered stretches follow at residues 46–117, 154–207, and 264–406; these read QQQQ…HNNI, LNNS…NNQF, and MLNV…ERHQ. 2 stretches are compositionally biased toward low complexity: residues 155 to 206 and 271 to 360; these read NNSY…NNNQ and NNAN…GSNN. Residues 328–366 are a coiled coil; that stretch reads NNNNNNSNNISTQINNLNNNINNQNNQLNGSNNGKKKEE. The bZIP domain occupies 405-468; that stretch reads HQKRQRRLVK…KLIREQLLYL (64 aa). The tract at residues 407-427 is basic motif; it reads KRQRRLVKNREAAQLFRQRQK. Residues 433–440 form a leucine-zipper region; that stretch reads LEKKVSDL. Residues 546 to 631 form a disordered region; sequence QGNLLGTPIP…PPQQSTPNQR (86 aa). 2 stretches are compositionally biased toward low complexity: residues 563–609 and 618–631; these read SNSG…PNSS and PQNTPPQQSTPNQR.

It belongs to the bZIP family.

It is found in the nucleus. In terms of biological role, probable transcriptional regulator. The chain is Probable basic-leucine zipper transcription factor F (bzpF) from Dictyostelium discoideum (Social amoeba).